A 254-amino-acid chain; its full sequence is Glutamate racemase (254 aa).

Residues 7–8 (DS) and 39–40 (YG) contribute to the substrate site. Catalysis depends on Cys-70, which acts as the Proton donor/acceptor. 71–72 (NT) contributes to the substrate binding site. The Proton donor/acceptor role is filled by Cys-178. A substrate-binding site is contributed by 179-180 (TH).

Belongs to the aspartate/glutamate racemases family.

It catalyses the reaction L-glutamate = D-glutamate. It participates in cell wall biogenesis; peptidoglycan biosynthesis. Functionally, provides the (R)-glutamate required for cell wall biosynthesis. In Aquifex aeolicus (strain VF5), this protein is Glutamate racemase.